The chain runs to 396 residues: Phosphoglycerate kinase (396 aa).

Substrate-binding positions include 23-25, arginine 38, 61-64, arginine 122, and arginine 155; these read DFN and HMGK. ATP contacts are provided by residues lysine 206, glycine 296, glutamate 327, and 353-356; that span reads GGDS.

It belongs to the phosphoglycerate kinase family. In terms of assembly, monomer.

It localises to the cytoplasm. The catalysed reaction is (2R)-3-phosphoglycerate + ATP = (2R)-3-phospho-glyceroyl phosphate + ADP. It functions in the pathway carbohydrate degradation; glycolysis; pyruvate from D-glyceraldehyde 3-phosphate: step 2/5. The polypeptide is Phosphoglycerate kinase (Clostridium botulinum (strain Alaska E43 / Type E3)).